The chain runs to 142 residues: 3-hydroxyacyl-[acyl-carrier-protein] dehydratase FabZ (142 aa).

H48 is a catalytic residue.

This sequence belongs to the thioester dehydratase family. FabZ subfamily.

Its subcellular location is the cytoplasm. The catalysed reaction is a (3R)-hydroxyacyl-[ACP] = a (2E)-enoyl-[ACP] + H2O. In terms of biological role, involved in unsaturated fatty acids biosynthesis. Catalyzes the dehydration of short chain beta-hydroxyacyl-ACPs and long chain saturated and unsaturated beta-hydroxyacyl-ACPs. This is 3-hydroxyacyl-[acyl-carrier-protein] dehydratase FabZ from Desulforamulus reducens (strain ATCC BAA-1160 / DSM 100696 / MI-1) (Desulfotomaculum reducens).